Reading from the N-terminus, the 107-residue chain is Universal stress protein B homolog (107 aa).

Helical transmembrane passes span 6–26 (TILF…LTAL) and 86–106 (VREL…AAFI).

This sequence belongs to the universal stress protein B family.

The protein resides in the cell inner membrane. The protein is Universal stress protein B homolog of Vibrio parahaemolyticus serotype O3:K6 (strain RIMD 2210633).